The sequence spans 233 residues: Orotidine 5'-phosphate decarboxylase (233 aa).

Substrate contacts are provided by residues Asp-11, Lys-33, 60–69 (DLKFHDIPNT), Thr-120, Arg-181, Gln-190, Gly-210, and Arg-211. Residue Lys-62 is the Proton donor of the active site.

It belongs to the OMP decarboxylase family. Type 1 subfamily. Homodimer.

The catalysed reaction is orotidine 5'-phosphate + H(+) = UMP + CO2. The protein operates within pyrimidine metabolism; UMP biosynthesis via de novo pathway; UMP from orotate: step 2/2. Functionally, catalyzes the decarboxylation of orotidine 5'-monophosphate (OMP) to uridine 5'-monophosphate (UMP). This chain is Orotidine 5'-phosphate decarboxylase, found in Vibrio campbellii (strain ATCC BAA-1116).